The sequence spans 410 residues: Cathepsin D (410 aa).

The first 18 residues, 1-18 (MQPPSLLLLVLGLLAAPA), serve as a signal peptide directing secretion. A propeptide spans 19–64 (AALVRIPLHKFTSVRRTMTELGGPVEDLIAKGPISKYAQGAPAVTG) (activation peptide). A Peptidase A1 domain is found at 79-405 (YYGEIGIGTP…DRDQNRVGLA (327 aa)). 2 disulfides stabilise this stretch: Cys-91/Cys-160 and Cys-110/Cys-117. The active site involves Asp-97. 2 N-linked (GlcNAc...) asparagine glycosylation sites follow: Asn-134 and Asn-261. Cys-284 and Cys-288 are oxidised to a cystine. Asp-293 is a catalytic residue. Cys-327 and Cys-364 are disulfide-bonded.

The protein belongs to the peptidase A1 family. In terms of assembly, consists of a light chain and a heavy chain. Interacts with ADAM30; this leads to activation of CTSD. Interacts with GRN; stabilizes CTSD; increases its proteolytic activity. N- and O-glycosylated. Post-translationally, undergoes proteolytic cleavage and activation by ADAM30.

Its subcellular location is the lysosome. The protein resides in the melanosome. It localises to the secreted. It is found in the extracellular space. It carries out the reaction Specificity similar to, but narrower than, that of pepsin A. Does not cleave the 4-Gln-|-His-5 bond in B chain of insulin.. Functionally, acid protease active in intracellular protein breakdown. Plays a role in APP processing following cleavage and activation by ADAM30 which leads to APP degradation. This chain is Cathepsin D (CTSD), found in Canis lupus familiaris (Dog).